The chain runs to 156 residues: ATP synthase subunit b (156 aa).

The helical transmembrane segment at 5–25 (LTLIGQAIAFAIFVAFCMKFV) threads the bilayer.

It belongs to the ATPase B chain family. F-type ATPases have 2 components, F(1) - the catalytic core - and F(0) - the membrane proton channel. F(1) has five subunits: alpha(3), beta(3), gamma(1), delta(1), epsilon(1). F(0) has three main subunits: a(1), b(2) and c(10-14). The alpha and beta chains form an alternating ring which encloses part of the gamma chain. F(1) is attached to F(0) by a central stalk formed by the gamma and epsilon chains, while a peripheral stalk is formed by the delta and b chains.

Its subcellular location is the cell inner membrane. In terms of biological role, f(1)F(0) ATP synthase produces ATP from ADP in the presence of a proton or sodium gradient. F-type ATPases consist of two structural domains, F(1) containing the extramembraneous catalytic core and F(0) containing the membrane proton channel, linked together by a central stalk and a peripheral stalk. During catalysis, ATP synthesis in the catalytic domain of F(1) is coupled via a rotary mechanism of the central stalk subunits to proton translocation. Its function is as follows. Component of the F(0) channel, it forms part of the peripheral stalk, linking F(1) to F(0). The sequence is that of ATP synthase subunit b from Acinetobacter baylyi (strain ATCC 33305 / BD413 / ADP1).